The following is a 105-amino-acid chain: Small ribosomal subunit protein uS10 (105 aa).

Belongs to the universal ribosomal protein uS10 family. Part of the 30S ribosomal subunit.

Its function is as follows. Involved in the binding of tRNA to the ribosomes. This Nostoc punctiforme (strain ATCC 29133 / PCC 73102) protein is Small ribosomal subunit protein uS10.